The following is a 628-amino-acid chain: uncharacterized protein (628 aa).

The protein belongs to the ATP-dependent AMP-binding enzyme family.

This is an uncharacterized protein from Pseudomonas aeruginosa (strain ATCC 15692 / DSM 22644 / CIP 104116 / JCM 14847 / LMG 12228 / 1C / PRS 101 / PAO1).